The following is a 479-amino-acid chain: uncharacterized protein (479 aa).

ATP-binding positions include 150 to 158 (TSGSTGKPK), Asp-360, Arg-375, and Lys-462.

This sequence belongs to the ATP-dependent AMP-binding enzyme family.

In terms of biological role, may be involved in fatty acid metabolism. This is an uncharacterized protein from Bacillus subtilis (strain 168).